The chain runs to 448 residues: Argininosuccinate synthase (448 aa).

Residues 17 to 25 (AFSGGLDTS) and alanine 43 contribute to the ATP site. Tyrosine 99 serves as a coordination point for L-citrulline. Glycine 129 and threonine 131 together coordinate ATP. Positions 131, 135, and 136 each coordinate L-aspartate. Asparagine 135 is a binding site for L-citrulline. Aspartate 136 is a binding site for ATP. 2 residues coordinate L-citrulline: arginine 139 and serine 192. ATP is bound at residue aspartate 194. L-citrulline contacts are provided by threonine 201, glutamate 203, and glutamate 280.

This sequence belongs to the argininosuccinate synthase family. Type 2 subfamily. As to quaternary structure, homotetramer.

Its subcellular location is the cytoplasm. The catalysed reaction is L-citrulline + L-aspartate + ATP = 2-(N(omega)-L-arginino)succinate + AMP + diphosphate + H(+). Its pathway is amino-acid biosynthesis; L-arginine biosynthesis; L-arginine from L-ornithine and carbamoyl phosphate: step 2/3. This Pectobacterium carotovorum subsp. carotovorum (strain PC1) protein is Argininosuccinate synthase.